The primary structure comprises 1405 residues: DNA-directed RNA polymerase subunit beta' (1405 aa).

Residues Cys-70, Cys-72, Cys-85, and Cys-88 each contribute to the Zn(2+) site. 3 residues coordinate Mg(2+): Asp-460, Asp-462, and Asp-464. Zn(2+) is bound by residues Cys-814, Cys-888, Cys-895, and Cys-898.

It belongs to the RNA polymerase beta' chain family. As to quaternary structure, the RNAP catalytic core consists of 2 alpha, 1 beta, 1 beta' and 1 omega subunit. When a sigma factor is associated with the core the holoenzyme is formed, which can initiate transcription. Mg(2+) is required as a cofactor. The cofactor is Zn(2+).

It catalyses the reaction RNA(n) + a ribonucleoside 5'-triphosphate = RNA(n+1) + diphosphate. DNA-dependent RNA polymerase catalyzes the transcription of DNA into RNA using the four ribonucleoside triphosphates as substrates. The sequence is that of DNA-directed RNA polymerase subunit beta' from Shewanella sediminis (strain HAW-EB3).